A 143-amino-acid polypeptide reads, in one-letter code: Large ribosomal subunit protein uL11 (143 aa).

This sequence belongs to the universal ribosomal protein uL11 family. In terms of assembly, part of the ribosomal stalk of the 50S ribosomal subunit. Interacts with L10 and the large rRNA to form the base of the stalk. L10 forms an elongated spine to which L12 dimers bind in a sequential fashion forming a multimeric L10(L12)X complex. In terms of processing, one or more lysine residues are methylated.

Functionally, forms part of the ribosomal stalk which helps the ribosome interact with GTP-bound translation factors. In Azotobacter vinelandii (strain DJ / ATCC BAA-1303), this protein is Large ribosomal subunit protein uL11.